Reading from the N-terminus, the 156-residue chain is Protein-export protein SecB (156 aa).

Belongs to the SecB family. Homotetramer, a dimer of dimers. One homotetramer interacts with 1 SecA dimer.

The protein resides in the cytoplasm. Its function is as follows. One of the proteins required for the normal export of preproteins out of the cell cytoplasm. It is a molecular chaperone that binds to a subset of precursor proteins, maintaining them in a translocation-competent state. It also specifically binds to its receptor SecA. The sequence is that of Protein-export protein SecB from Aliivibrio fischeri (strain ATCC 700601 / ES114) (Vibrio fischeri).